A 165-amino-acid chain; its full sequence is Adenine phosphoribosyltransferase (165 aa).

Belongs to the purine/pyrimidine phosphoribosyltransferase family. Homodimer.

It localises to the cytoplasm. It catalyses the reaction AMP + diphosphate = 5-phospho-alpha-D-ribose 1-diphosphate + adenine. It participates in purine metabolism; AMP biosynthesis via salvage pathway; AMP from adenine: step 1/1. Catalyzes a salvage reaction resulting in the formation of AMP, that is energically less costly than de novo synthesis. The chain is Adenine phosphoribosyltransferase from Bdellovibrio bacteriovorus (strain ATCC 15356 / DSM 50701 / NCIMB 9529 / HD100).